Reading from the N-terminus, the 1135-residue chain is Envelopment polyprotein (1135 aa).

The first 18 residues, 1–18, serve as a signal peptide directing secretion; sequence MGIWKWLVMASLVWPVLT. Topologically, residues 19–485 are lumenal; it reads LRNVYDMKIE…VPGFHGWATA (467 aa). Disulfide bonds link Cys29–Cys151, Cys63–Cys157, Cys109–Cys128, Cys133–Cys138, Cys175–Cys185, Cys210–Cys247, Cys234–Cys351, Cys376–Cys435, Cys380–Cys389, Cys405–Cys424, and Cys452–Cys475. N-linked (GlcNAc...) asparagine; by host glycosylation is present at Asn134. Residues Asn235 and Asn347 are each glycosylated (N-linked (GlcNAc...) asparagine; by host). The N-linked (GlcNAc...) asparagine; by host glycan is linked to Asn399. The helical transmembrane segment at 486 to 506 threads the bilayer; sequence ALLVTFCFGWVLIPAITFIIL. Over 507-627 the chain is Cytoplasmic; the sequence is TVLKFIANIF…LNLFRYKSRC (121 aa). Residues 516–533 form a binding to the ribonucleoprotein region; it reads FHTSNQENRLKSVLRKIK. CCHC-type zinc fingers lie at residues 545 to 565 and 570 to 591; these read CDVC…GVSC and CPYC…YKVC. 3 binding to the ribonucleoprotein regions span residues 588–605, 592–603, and 611–625; these read YKVC…KKTV, QVTHRFRDDLKK, and TPGC…RYKS. In terms of domain architecture, ITAM spans 611 to 634; that stretch reads TPGCYRTLNLFRYKSRCYIFTMWI. Residues 615 to 618 carry the YxxL motif; it reads YRTL. The helical transmembrane segment at 628–648 threads the bilayer; it reads YIFTMWIFLLVLESILWAASA. At 649-1105 the chain is on the lumenal side; the sequence is SETPLTPVWN…EWISGIFSGN (457 aa). Intrachain disulfides connect Cys735–Cys770, Cys739–Cys777, Cys751–Cys885, Cys765–Cys896, Cys780–Cys904, Cys806–Cys815, Cys823–Cys832, and Cys863–Cys867. The interval 757 to 777 is fusion loop; sequence YQYETSWGCNPSDCPGVGTGC. Residue Asn928 is glycosylated (N-linked (GlcNAc...) asparagine; by host). Intrachain disulfides connect Cys970–Cys1000, Cys993–Cys1045, Cys1010–Cys1015, Cys1046–Cys1051, and Cys1085–Cys1089. The chain crosses the membrane as a helical span at residues 1106-1126; the sequence is WIVLIVLCVFLLFSLVLLSIL. The tract at residues 1122–1135 is binding to the ribonucleoprotein; the sequence is LLSILCPVRKHKKS. Over 1127 to 1135 the chain is Cytoplasmic; sequence CPVRKHKKS.

The protein belongs to the hantavirus envelope glycoprotein family. As to quaternary structure, homodimer. Homotetramer; forms heterotetrameric Gn-Gc spikes in the pre-fusion conformation. Interacts (via C-terminus) with the nucleoprotein. Interacts with host TUFM; this interaction contributes to the virus-induced degradation of mitochondria by autophagy, which leads to degradation of host MAVS and inhibition of type I interferon (IFN) responses. Interacts with host MAP1LC3B; this interaction contributes to the virus-induced degradation of mitochondria by autophagy, which leads to degradation of host MAVS and inhibition of type I interferon (IFN) responses. Homotetramer; forms heterotetrameric Gn-Gc spikes in the pre-fusion conformation. Homotrimer; forms homotrimer in the post-fusion conformation at acidic pH. Interacts (via C-terminus) with the nucleoprotein. Specific enzymatic cleavage in vivo yield the mature proteins Glycoprotein N and Glycoprotein C.

The protein resides in the virion membrane. It is found in the host cell surface. Its subcellular location is the host Golgi apparatus membrane. The protein localises to the host endoplasmic reticulum membrane. It localises to the host mitochondrion. Its function is as follows. Forms homotetramers with glycoprotein C at the surface of the virion. Attaches the virion to host cell receptors including integrin ITGAV/ITGB3. This attachment induces virion internalization predominantly through clathrin-dependent endocytosis. May also bind to host C1QBP for virus entry into the host cell. Mediates the assembly and budding of infectious virus particles through its interaction with the nucleocapsid protein and the viral genome. May dysregulate normal immune and endothelial cell responses through an ITAM motif. Translocates to mitochondria, binds to host TUFM and recruits MAP1LC3B. These interactions induce mitochondrial autophagy and therefore destruction of host MAVS leading to inhibition of type I interferon (IFN) responses. Concomitant breakdown of glycoprotein N is apparently prevented by the nucleoprotein that may inhibit Gn-stimulated autophagosome-lysosome fusion. Interacts with the viral genomic RNA. In terms of biological role, homodimer. Homotetramer; forms heterotetrameric Gn-Gc spikes in the pre-fusion conformation. Attaches the virion to host cell receptors including integrin ITGAV/ITGB3. This attachment induces virion internalization predominantly through clathrin-dependent endocytosis. May also bind to host C1QBP for virus entry into the host cell. Class II fusion protein that promotes fusion of viral membrane with host endosomal membrane after endocytosis of the virion. This is Envelopment polyprotein (GP) from Apodemus agrarius (Eurasian field mouse).